The primary structure comprises 686 residues: Glycine--tRNA ligase beta subunit (686 aa).

The protein belongs to the class-II aminoacyl-tRNA synthetase family. In terms of assembly, tetramer of two alpha and two beta subunits.

The protein localises to the cytoplasm. The enzyme catalyses tRNA(Gly) + glycine + ATP = glycyl-tRNA(Gly) + AMP + diphosphate. This Halothermothrix orenii (strain H 168 / OCM 544 / DSM 9562) protein is Glycine--tRNA ligase beta subunit.